The primary structure comprises 82 residues: Translation initiation factor IF-1, chloroplastic (82 aa).

The S1-like domain maps to 1–72; that stretch reads MNKQNLIDVE…TKGRIIYRLR (72 aa).

It belongs to the IF-1 family. Component of the 30S ribosomal translation pre-initiation complex which assembles on the 30S ribosome in the order IF-2 and IF-3, IF-1 and N-formylmethionyl-tRNA(fMet); mRNA recruitment can occur at any time during PIC assembly.

Its subcellular location is the plastid. It localises to the chloroplast. One of the essential components for the initiation of protein synthesis. Stabilizes the binding of IF-2 and IF-3 on the 30S subunit to which N-formylmethionyl-tRNA(fMet) subsequently binds. Helps modulate mRNA selection, yielding the 30S pre-initiation complex (PIC). Upon addition of the 50S ribosomal subunit IF-1, IF-2 and IF-3 are released leaving the mature 70S translation initiation complex. This chain is Translation initiation factor IF-1, chloroplastic, found in Cycas taitungensis (Prince sago).